The primary structure comprises 582 residues: Enhancer of polycomb-like protein 1 (582 aa).

Positions 238-295 form a coiled coil; it reads RDAQSADKLRRLRKELEDARQLVALVRQRELARKEMLSMERQIFLQRSEVKEMKRKLN. The segment at 323 to 351 is disordered; the sequence is PEQPKKKPAEAPAAQRPTAPQIRMPQKPG. The stretch at 352 to 385 forms a coiled coil; sequence TQAADDMQLLEDVQAEKENEILRDIKQNIAKHIK. A compositionally biased stretch (low complexity) spans 539–555; the sequence is AQAHAQAQAQKRLQAEQ. Positions 539-582 are disordered; it reads AQAHAQAQAQKRLQAEQTTTNNGPPNIGHTMGSNPGPGAVASTS.

It belongs to the enhancer of polycomb family. As to quaternary structure, component of the NuA4 histone acetyltransferase complex.

Its subcellular location is the nucleus. Component of the NuA4 histone acetyltransferase complex which is involved in transcriptional activation of selected genes principally by acetylation of nucleosomal histone H4 and H2A. The NuA4 complex is also involved in DNA repair. Involved in gene silencing by neighboring heterochromatin, blockage of the silencing spreading along the chromosome, and required for cell cycle progression through G2/M. This Aspergillus fumigatus (strain ATCC MYA-4609 / CBS 101355 / FGSC A1100 / Af293) (Neosartorya fumigata) protein is Enhancer of polycomb-like protein 1 (epl1).